Consider the following 285-residue polypeptide: N(G),N(G)-dimethylarginine dimethylaminohydrolase 1 (285 aa).

Ala-2 carries the N-acetylalanine modification. Substrate-binding positions include Leu-30, Asp-73, Glu-78–Asp-79, Arg-98, and Arg-145. The Proton donor role is filled by His-173. Residue Cys-222 is modified to S-nitrosocysteine. Residue Val-268 coordinates substrate. Cys-274 carries the S-nitrosocysteine modification. Cys-274 (nucleophile) is an active-site residue. Zn(2+) is bound at residue Cys-274.

Belongs to the DDAH family. In terms of assembly, monomer. In terms of tissue distribution, detected in brain, liver, kidney and pancreas, and at low levels in skeletal muscle.

The enzyme catalyses N(omega),N(omega)-dimethyl-L-arginine + H2O = dimethylamine + L-citrulline. It carries out the reaction N(omega)-methyl-L-arginine + H2O = L-citrulline + methylamine. With respect to regulation, inhibited by zinc ions. Enzyme purified in the absence of 1,10-phenanthroline contains on average 0.4 zinc atoms per subunit. Inhibited by 4-hydroxy-nonenal through the formation of a covalent adduct with His-173. Competitively inhibited by N(5)-iminopropyl-ornithine. Functionally, hydrolyzes N(G),N(G)-dimethyl-L-arginine (ADMA) and N(G)-monomethyl-L-arginine (MMA) which act as inhibitors of NOS. Has therefore a role in the regulation of nitric oxide generation. The sequence is that of N(G),N(G)-dimethylarginine dimethylaminohydrolase 1 from Homo sapiens (Human).